A 458-amino-acid chain; its full sequence is tRNA modification GTPase MnmE (458 aa).

3 residues coordinate (6S)-5-formyl-5,6,7,8-tetrahydrofolate: arginine 26, glutamate 88, and arginine 127. Residues 224–378 (GLSTAIIGRP…IEDRINQLFF (155 aa)) form the TrmE-type G domain. K(+) is bound at residue asparagine 234. GTP is bound by residues 234-239 (NVGKSS), 253-259 (TDIAGTT), and 278-281 (DTAG). Serine 238 lines the Mg(2+) pocket. K(+) contacts are provided by threonine 253, isoleucine 255, and threonine 258. Residue threonine 259 participates in Mg(2+) binding. Lysine 458 contributes to the (6S)-5-formyl-5,6,7,8-tetrahydrofolate binding site.

Belongs to the TRAFAC class TrmE-Era-EngA-EngB-Septin-like GTPase superfamily. TrmE GTPase family. In terms of assembly, homodimer. Heterotetramer of two MnmE and two MnmG subunits. Requires K(+) as cofactor.

It localises to the cytoplasm. Its function is as follows. Exhibits a very high intrinsic GTPase hydrolysis rate. Involved in the addition of a carboxymethylaminomethyl (cmnm) group at the wobble position (U34) of certain tRNAs, forming tRNA-cmnm(5)s(2)U34. The chain is tRNA modification GTPase MnmE from Streptococcus pyogenes serotype M12 (strain MGAS9429).